The primary structure comprises 428 residues: Glutamine synthetase, chloroplastic (428 aa).

The N-terminal 49 residues, 1 to 49, are a transit peptide targeting the chloroplast; it reads MAQILAASPTCQMRLTKPSSIASSKLWNSVVLKQKKQSSSKVRSFKVMA. A GS beta-grasp domain is found at 75–155; the sequence is IIAEYIWIGG…VICDTYTPAG (81 aa). The disordered stretch occupies residues 94–120; sequence RTLEKPVEDPSELPKWNYDGSSTGQAP. A Phosphoserine modification is found at serine 104. The GS catalytic domain occupies 159-428; it reads PTNKRARAAE…LAAQKLSLKV (270 aa).

This sequence belongs to the glutamine synthetase family. Homooctamer.

The protein localises to the plastid. Its subcellular location is the chloroplast. The catalysed reaction is L-glutamate + NH4(+) + ATP = L-glutamine + ADP + phosphate + H(+). In terms of biological role, the light-modulated chloroplast enzyme, encoded by a nuclear gene and expressed primarily in leaves, is responsible for the reassimilation of the ammonia generated by photorespiration. The sequence is that of Glutamine synthetase, chloroplastic (GLN2) from Brassica napus (Rape).